A 542-amino-acid chain; its full sequence is MNTFTSNSSDLTSTTKQTLSFSNMYLLTTLQAFVAITLVMLLKKVLVNDTNKKKLSLPPGPTGWPIIGMVPTMLKSRPVFRWLHSIMKQLNTEIACVRLGSTHVITVTCPKIAREVLKQQDALFASRPMTYAQNVLSNGYKTCVITPFGEQFKKMRKVVMTELVCPARHRWLHQKRAEENDHLTAWVYNMVNNSDSVDFRFVTRHYCGNAIKKLMFGTRTFSQNTAPNGGPTAEDIEHMEAMFEALGFTFSFCISDYLPILTGLDLNGHEKIMRDSSAIMDKYHDPIIDARIKMWREGKKTQIEDFLDIFISIKDEEGNPLLTADEIKPTIKELVMAAPDNPSNAVEWAMAEMVNKPEILRKAMEEIDRVVGKERLVQESDIPKLNYVKAILREAFRLHPVAAFNLPHVALSDATVAGYHIPKGSQVLLSRYGLGRNPKVWADPLSFKPERHLNECSEVTLTENDLRFISFSTGKRGCAAPALGTALTTMLLARLLQGFTWKLPENETRVELMESSHDMFLAKPLVMVGELRLPEHLYPTVK.

Residues 21–41 (FSNMYLLTTLQAFVAITLVML) form a helical membrane-spanning segment. C478 lines the heme pocket.

This sequence belongs to the cytochrome P450 family. It depends on heme as a cofactor.

It is found in the membrane. Its function is as follows. Converts tyrosine to para-hydrophenylacetaldoxime in para-hydroxybenzylglucosinolate biosynthesis. The protein is Cytochrome P450 79B1 (CYP79B1) of Sinapis alba (White mustard).